Here is a 299-residue protein sequence, read N- to C-terminus: Tyrosine recombinase XerC (299 aa).

The region spanning 1–85 (MDQHLDAYCM…AVRGFYKYLN (85 aa)) is the Core-binding (CB) domain. The Tyr recombinase domain maps to 106 to 285 (RLPKTLDTDR…DFQHLATVYD (180 aa)). Active-site residues include Arg-146, Lys-170, His-237, Arg-240, and His-263. The O-(3'-phospho-DNA)-tyrosine intermediate role is filled by Tyr-272.

Belongs to the 'phage' integrase family. XerC subfamily. In terms of assembly, forms a cyclic heterotetrameric complex composed of two molecules of XerC and two molecules of XerD.

It localises to the cytoplasm. Functionally, site-specific tyrosine recombinase, which acts by catalyzing the cutting and rejoining of the recombining DNA molecules. The XerC-XerD complex is essential to convert dimers of the bacterial chromosome into monomers to permit their segregation at cell division. It also contributes to the segregational stability of plasmids. This chain is Tyrosine recombinase XerC, found in Pseudomonas syringae pv. syringae (strain B728a).